A 146-amino-acid chain; its full sequence is Large ribosomal subunit protein uL15 (146 aa).

The segment at 1-54 is disordered; the sequence is MTIKLHDLRPAPGSKTPRTRVGRGEGSKGKTAGRGTKGTKARKQVPTTFEGGQM.

This sequence belongs to the universal ribosomal protein uL15 family. In terms of assembly, part of the 50S ribosomal subunit.

Binds to the 23S rRNA. The polypeptide is Large ribosomal subunit protein uL15 (Mycobacterium marinum (strain ATCC BAA-535 / M)).